A 176-amino-acid polypeptide reads, in one-letter code: Flavodoxin 1 (176 aa).

One can recognise a Flavodoxin-like domain in the interval 4–165 (TGIFFGSDTG…RVEKWVKQIS (162 aa)).

Belongs to the flavodoxin family. Requires FMN as cofactor.

Low-potential electron donor to a number of redox enzymes (Potential). Involved in the reactivation of inactive cob(II)alamin in methionine synthase. This chain is Flavodoxin 1 (fldA), found in Escherichia coli O157:H7.